Reading from the N-terminus, the 66-residue chain is Beta-defensin 134 (66 aa).

A signal peptide spans Met-1–Ala-19. Disulfide bonds link Cys-32–Cys-58, Cys-38–Cys-52, and Cys-42–Cys-59.

Belongs to the beta-defensin family.

It localises to the secreted. Has antibacterial activity. The protein is Beta-defensin 134 (DEFB134) of Homo sapiens (Human).